The sequence spans 290 residues: Nucleotide-binding protein Clos_0574 (290 aa).

Residue 8–15 (GLSGAGKS) participates in ATP binding. 59 to 62 (DIRG) provides a ligand contact to GTP.

It belongs to the RapZ-like family.

In terms of biological role, displays ATPase and GTPase activities. The chain is Nucleotide-binding protein Clos_0574 from Alkaliphilus oremlandii (strain OhILAs) (Clostridium oremlandii (strain OhILAs)).